The following is a 251-amino-acid chain: Probable transcriptional regulatory protein jk1057 (251 aa).

A disordered region spans residues 1-22; that stretch reads MAGHSKWATTKHKKAANDAKRG.

This sequence belongs to the TACO1 family.

The protein localises to the cytoplasm. This chain is Probable transcriptional regulatory protein jk1057, found in Corynebacterium jeikeium (strain K411).